Here is a 62-residue protein sequence, read N- to C-terminus: DNA-directed RNA polymerase subunit Rpo10 (62 aa).

Zn(2+)-binding residues include cysteine 6, cysteine 9, cysteine 43, and cysteine 44.

Belongs to the archaeal Rpo10/eukaryotic RPB10 RNA polymerase subunit family. As to quaternary structure, part of the RNA polymerase complex. Requires Zn(2+) as cofactor.

The protein localises to the cytoplasm. It catalyses the reaction RNA(n) + a ribonucleoside 5'-triphosphate = RNA(n+1) + diphosphate. DNA-dependent RNA polymerase (RNAP) catalyzes the transcription of DNA into RNA using the four ribonucleoside triphosphates as substrates. This is DNA-directed RNA polymerase subunit Rpo10 from Methanosphaerula palustris (strain ATCC BAA-1556 / DSM 19958 / E1-9c).